Consider the following 309-residue polypeptide: Hydroxyacylglutathione hydrolase, mitochondrial (309 aa).

A mitochondrion-targeting transit peptide spans 1–24 (MVLGRGSLCLRSLSALGATCARRG). Position 90 is an N6-acetyllysine (Lys-90). The Zn(2+) site is built by His-103, His-105, Asp-107, and His-108. An N6-acetyllysine modification is found at Lys-117. Zn(2+) is bound by residues His-159 and Asp-183. Residues 192 to 194 (KFY) and 222 to 224 (HEY) each bind substrate. His-222 is a Zn(2+) binding site. The residue at position 230 (Lys-230) is an N6-acetyllysine; alternate. Lys-230 carries the N6-succinyllysine; alternate modification. Position 298–301 (298–301 (RREK)) interacts with substrate.

This sequence belongs to the metallo-beta-lactamase superfamily. Glyoxalase II family. As to quaternary structure, monomer. Zn(2+) is required as a cofactor.

The protein localises to the mitochondrion matrix. Its subcellular location is the cytoplasm. The catalysed reaction is an S-(2-hydroxyacyl)glutathione + H2O = a 2-hydroxy carboxylate + glutathione + H(+). The enzyme catalyses (R)-S-lactoylglutathione + H2O = (R)-lactate + glutathione + H(+). It functions in the pathway secondary metabolite metabolism; methylglyoxal degradation; (R)-lactate from methylglyoxal: step 2/2. In terms of biological role, thiolesterase that catalyzes the hydrolysis of S-D-lactoyl-glutathione to form glutathione and D-lactic acid. This is Hydroxyacylglutathione hydrolase, mitochondrial (Hagh) from Mus musculus (Mouse).